The primary structure comprises 474 residues: Equilibrative nucleoside transporter 3 (474 aa).

The Cytoplasmic segment spans residues 1-53 (MAIISEDDFRHTSNSTYRTASSSLRADQEALLEKLLDRPPPSLQRPEDRFNGT). Phosphoserine is present on residues serine 21 and serine 23. Positions 31-32 (LL) match the Dileucine internalization motif motif. The chain crosses the membrane as a helical span at residues 54–74 (YIIFFSLGIGGLLPWNFFVTA). The Extracellular portion of the chain corresponds to 75–105 (QEYWIFKLSNCSSPAAGEEPKDSDILNYFES). N-linked (GlcNAc...) asparagine glycosylation occurs at asparagine 84. Residues 106-126 (YLAVASTVPSVLCLALNFLLV) traverse the membrane as a helical segment. The Cytoplasmic portion of the chain corresponds to 127–134 (NRVPIRVR). A helical membrane pass occupies residues 135–155 (VLASLTVMLAIFIVMTVLVKV). At 156–161 (DTSSWT) the chain is on the extracellular side. The helical transmembrane segment at 162-182 (HSFFTITITCMAILSGTSTIF) threads the bilayer. At 183–201 (NSSVFGMTGSFPMRNSQAL) the chain is on the cytoplasmic side. The helical transmembrane segment at 202-222 (ISGGAMGGTLSAVASLVDLAV) threads the bilayer. At 223–230 (ASDVTDST) the chain is on the extracellular side. Residues 231–251 (LAFFLTADIFLALCIGLYLLL) form a helical membrane-spanning segment. At 252-305 (PRLDYARYYMKPVWPTVFSGEEQLPQDSPSPTSVAPGSSDPQTPPLGPILKKTT) the chain is on the cytoplasmic side. The disordered stretch occupies residues 272-294 (EEQLPQDSPSPTSVAPGSSDPQT). A compositionally biased stretch (polar residues) spans 276 to 292 (PQDSPSPTSVAPGSSDP). The helical transmembrane segment at 306–326 (GLGFCIIYLFFITSLIFPAIC) threads the bilayer. The Extracellular portion of the chain corresponds to 327 to 339 (TNIESLSKGSGSP). Residues 340–357 (WSTKFFVPLTTFLLYNFA) traverse the membrane as a helical segment. At 358 to 376 (DLCGRQVTAWIQVPGPRSK) the chain is on the cytoplasmic side. The helical transmembrane segment at 377–397 (ALPGLALLRTCFVPLFVFCNY) threads the bilayer. Residues 398–414 (QPRGHLHTVLFQSDVYP) lie on the Extracellular side of the membrane. Residues 415–435 (VLFTSLLGLSNGYLSTLALIY) form a helical membrane-spanning segment. Residues 436-453 (GPKIVPRELAEATGVVMT) lie on the Cytoplasmic side of the membrane. A helical membrane pass occupies residues 454 to 474 (FYMGLGLVLGSACSALLVHLI).

It belongs to the SLC29A/ENT transporter (TC 2.A.57) family.

The protein resides in the lysosome membrane. It localises to the late endosome membrane. Its subcellular location is the mitochondrion membrane. It is found in the cell membrane. It catalyses the reaction adenosine(in) = adenosine(out). It carries out the reaction guanosine(in) = guanosine(out). The enzyme catalyses inosine(in) = inosine(out). The catalysed reaction is uridine(out) = uridine(in). It catalyses the reaction cytidine(in) = cytidine(out). It carries out the reaction thymidine(in) = thymidine(out). The enzyme catalyses 2'-deoxyadenosine(in) = 2'-deoxyadenosine(out). The catalysed reaction is 2'-deoxycytidine(in) = 2'-deoxycytidine(out). It catalyses the reaction guanine(out) = guanine(in). It carries out the reaction uracil(in) = uracil(out). The enzyme catalyses (R)-noradrenaline(out) = (R)-noradrenaline(in). The catalysed reaction is dopamine(out) = dopamine(in). It catalyses the reaction serotonin(out) = serotonin(in). It carries out the reaction tyramine(in) = tyramine(out). The enzyme catalyses ATP(in) = ATP(out). In terms of biological role, uniporter that mediates the facilitative transport of nucleoside across lysosomal and mitochondrial membranes. Functions as a non-electrogenic Na(+)-independent transporter. Substrate transport is pH-dependent and enhanced under acidic condition, probably reflecting the location of the transporter in acidic intracellular compartments. Proton is not a cotransporting ion but most likely change the ionization state of the transporter which dictates transport-permissible/impermissible conformation for nucleoside translocation. May direct the nucleoside transport from lysosomes to cytosol or cytosol to mitochondria to facilitate the fundamental function of salvage synthesis of nucleic acids. Involved in the transport of nucleosides (adenosine, guanosine, uridine, thymidine, cytidine and inosine) and deoxynucleosides (deoxyadenosine, deoxycytidine). Also mediates transport of purine nucleobases (adenine, guanine) and pyrimidine nucleobases (uracil). Also able to transport monoamine neurotransmitters dopamine, serotonin, noradrenaline and tyramine. Capable of transporting ATP. Mediates nucleoside export from lysosomes in macrophages, which regulates macrophage functions and numbers. The polypeptide is Equilibrative nucleoside transporter 3 (SLC29A3) (Bos taurus (Bovine)).